Consider the following 427-residue polypeptide: Enolase 2 (427 aa).

(2R)-2-phosphoglycerate is bound at residue glutamine 165. The active-site Proton donor is the glutamate 207. 3 residues coordinate Mg(2+): aspartate 244, glutamate 287, and aspartate 314. (2R)-2-phosphoglycerate is bound by residues lysine 339, arginine 368, serine 369, and lysine 390. Lysine 339 functions as the Proton acceptor in the catalytic mechanism.

This sequence belongs to the enolase family. In terms of assembly, component of the RNA degradosome, a multiprotein complex involved in RNA processing and mRNA degradation. Requires Mg(2+) as cofactor.

Its subcellular location is the cytoplasm. The protein localises to the secreted. The protein resides in the cell surface. The catalysed reaction is (2R)-2-phosphoglycerate = phosphoenolpyruvate + H2O. It participates in carbohydrate degradation; glycolysis; pyruvate from D-glyceraldehyde 3-phosphate: step 4/5. Catalyzes the reversible conversion of 2-phosphoglycerate (2-PG) into phosphoenolpyruvate (PEP). It is essential for the degradation of carbohydrates via glycolysis. The sequence is that of Enolase 2 from Pseudomonas syringae pv. syringae (strain B728a).